We begin with the raw amino-acid sequence, 213 residues long: GTP cyclohydrolase 1 (213 aa).

The disordered stretch occupies residues 1–27 (MDDVVKSLLQRTTSSLTKPAPARPSRE). Zn(2+)-binding residues include Cys-100, His-103, and Cys-172.

The protein belongs to the GTP cyclohydrolase I family. As to quaternary structure, homomer.

It carries out the reaction GTP + H2O = 7,8-dihydroneopterin 3'-triphosphate + formate + H(+). The protein operates within cofactor biosynthesis; 7,8-dihydroneopterin triphosphate biosynthesis; 7,8-dihydroneopterin triphosphate from GTP: step 1/1. The protein is GTP cyclohydrolase 1 of Beijerinckia indica subsp. indica (strain ATCC 9039 / DSM 1715 / NCIMB 8712).